We begin with the raw amino-acid sequence, 676 residues long: Urocanate hydratase (676 aa).

Residues 15–35 are disordered; that stretch reads PLPENRGRQAGVPHAPVRTPS. NAD(+) is bound by residues 126–127, glutamine 204, 251–253, glutamate 271, 317–318, 343–347, 354–355, tyrosine 403, and glycine 594; these read GG, GMS, NV, QTSCH, and YY.

This sequence belongs to the urocanase family. Requires NAD(+) as cofactor.

It catalyses the reaction 4-imidazolone-5-propanoate = trans-urocanate + H2O. It participates in amino-acid degradation; L-histidine degradation into L-glutamate; N-formimidoyl-L-glutamate from L-histidine: step 2/3. The chain is Urocanate hydratase (UROC1) from Homo sapiens (Human).